Consider the following 650-residue polypeptide: Protein ANTI-SILENCING 1 (650 aa).

Residues 38-169 (DEYRLYDCVL…VGSCKVVDTI (132 aa)) form the BAH domain. Disordered stretches follow at residues 202–223 (NGKS…GSVR), 229–248 (AFES…EKEK), 257–359 (KSTL…QKLD), and 425–448 (VTEK…ADDN). Composition is skewed to basic and acidic residues over residues 259–270 (TLAEERSNKDSG) and 277–287 (NGKDQESEVKK). The span at 302–315 (SNSFEASGSRTIHS) shows a compositional bias: polar residues. 2 stretches are compositionally biased toward basic and acidic residues: residues 348 to 358 (LDDRPLKKQKL) and 438 to 448 (RAEDKMSADDN). Residues 486–569 (TVVLLQNLDP…RPLVASFAKI (84 aa)) form the RRM domain.

As to quaternary structure, component of the ASI1-AIPP1-EDM2 (AAE) RNA regulatory complex composed of at least AIPP1/EDM3, ASI1 and EDM2 and may contain CPL2, AIPP2 and AIPP3/BDT1. Binds directly to AIPP1/EDM3 and AIPP2.

In terms of biological role, collaboratively with AIPP1/EDM3 and EDM2, the AAE complex regulates alternative RNA processing (e.g. alternative splicing) and epigenetic silencing (e.g. H3K9me2) of intronic heterochromatin-containing genes as well as genic heterochromatin-containing genes by promoting distal 3' polyadenylation; may associate with intronic heterochromatin and bind gene transcripts to modulate polyadenylation. Required to prevent promoter DNA hypermethylation and transcriptional silencing of some transgenes. Plays a similar role to that of the histone H3K9 demethylase JMJ25/IBM1 in preventing CHG methylation in the bodies of numerous genes. RNA-binding protein that ensures the proper expression of JMJ25/IBM1 full-length transcript by associating with an intronic heterochromatic repeat element of JMJ25/IBM1. Also modulates transposable elements (TE) expression. Contributes to a unique mechanism to deal with the collateral effect of silencing intronic repeat elements. This chain is Protein ANTI-SILENCING 1, found in Arabidopsis thaliana (Mouse-ear cress).